The following is a 1225-amino-acid chain: ATP-dependent helicase/nuclease subunit A (1225 aa).

Residues 11-478 (AQWTDAQWKS…IDLSKNFRSR (468 aa)) enclose the UvrD-like helicase ATP-binding domain. Residue 32 to 39 (AAAGSGKT) participates in ATP binding. In terms of domain architecture, UvrD-like helicase C-terminal spans 479 to 790 (KEVLATTNYL…RMMTVHSSKG (312 aa)). Positions 999-1014 (EKPSKQSVSELKRQLE) are enriched in basic and acidic residues. The tract at residues 999 to 1018 (EKPSKQSVSELKRQLETEES) is disordered.

This sequence belongs to the helicase family. AddA subfamily. In terms of assembly, heterodimer of AddA and AddB/RexB. Requires Mg(2+) as cofactor.

It carries out the reaction Couples ATP hydrolysis with the unwinding of duplex DNA by translocating in the 3'-5' direction.. The enzyme catalyses ATP + H2O = ADP + phosphate + H(+). Functionally, the heterodimer acts as both an ATP-dependent DNA helicase and an ATP-dependent, dual-direction single-stranded exonuclease. Recognizes the chi site generating a DNA molecule suitable for the initiation of homologous recombination. The AddA nuclease domain is required for chi fragment generation; this subunit has the helicase and 3' -&gt; 5' nuclease activities. This chain is ATP-dependent helicase/nuclease subunit A, found in Staphylococcus haemolyticus (strain JCSC1435).